The primary structure comprises 851 residues: MTKTNISPGMQQYLDIKKDYPDAFLLFRMGDFYELFYEDAVKAAQLLEIGLTSRNKNAENPIPMAGVPHHSAQQYIDVLIELGYKVAVAEQMEDPKQAVGVVKREVVQVITPGTVVDSAKPDSANNFLVAVDFDGCRYGLAYMDVSTGEFCVTDLADFTSVRSEIQNLKAKEVLLGFDLSEEEQTILVKQMNLLLSYEETVYEDKSLIDGQLTTVELTAAGKLLQYVHKTQMRELSHLQALVHYEIKDYLQMSYATKSSLDLVENARTNKKHGSLYWLLDETKTAMGMRLLRSWIDRPLVSKEAILERQEIIQVFLNAFIERTDLSNSLKGVYDIERLSSRVSFGKANPKDLLQLGYTLAQVPYIKAILESFDSPCVDKLVNDIDSLPELEYLIRTAIDPDAPATISEGSIIRTGFDERLDHYRKVMREGTGWIADIEAKERQESGINNLKIDYNKKDGYYFHVTNSNLSLVPEHFFRKATLKNSERYGTAELAKIEGQMLEAREESSSLEYDIFMCIRAQVETYINRLQKLAKTLATVDVLQSLAVVAETNHYIRPQFNDNHVITIQEGRHAVVEKVMGVQEYIPNSISFDQQTSIQLITGPNMSGKSTYMRQLALTVIMAQMGSFVAADHVDLPLFDAIFTRIGAADDLISGQSTFMVEMMEANQAIKRASDNSLILFDELGRGTATYDGMALAQAIIEYIHDRVGAKTIFATHYHELTDLSTKLTSLVNVHVATLEKDGDVTFLHKIAEGPADKSYGIHVAKIAGLPKSLLKRADEVLTRLETQSRSTEIMSVPPQVESSSAVRQGQLSLFGDDEKAHEIRQALEAIDVMNMTPFQAMTTLYELKKLL.

602 to 609 (GPNMSGKS) serves as a coordination point for ATP.

Belongs to the DNA mismatch repair MutS family.

In terms of biological role, this protein is involved in the repair of mismatches in DNA. It is possible that it carries out the mismatch recognition step. This protein has a weak ATPase activity. This Streptococcus pyogenes serotype M12 (strain MGAS2096) protein is DNA mismatch repair protein MutS.